The following is a 450-amino-acid chain: Tubulin alpha chain, testis-specific (450 aa).

The MREC motif motif lies at 1–4 (MREC). GTP is bound at residue Gln11. Residue Lys40 is modified to N6-acetyllysine. 7 residues coordinate GTP: Glu71, Ser140, Gly144, Thr145, Thr179, Asn206, and Asn228. Glu71 contacts Mg(2+). The active site involves Glu254.

The protein belongs to the tubulin family. Dimer of alpha and beta chains. A typical microtubule is a hollow water-filled tube with an outer diameter of 25 nm and an inner diameter of 15 nM. Alpha-beta heterodimers associate head-to-tail to form protofilaments running lengthwise along the microtubule wall with the beta-tubulin subunit facing the microtubule plus end conferring a structural polarity. Microtubules usually have 13 protofilaments but different protofilament numbers can be found in some organisms and specialized cells. Requires Mg(2+) as cofactor. Post-translationally, some glutamate residues at the C-terminus are polyglycylated, resulting in polyglycine chains on the gamma-carboxyl group. Glycylation is mainly limited to tubulin incorporated into axonemes (cilia and flagella) whereas glutamylation is prevalent in neuronal cells, centrioles, axonemes, and the mitotic spindle. Both modifications can coexist on the same protein on adjacent residues, and lowering polyglycylation levels increases polyglutamylation, and reciprocally. The precise function of polyglycylation is still unclear. Some glutamate residues at the C-terminus are polyglutamylated, resulting in polyglutamate chains on the gamma-carboxyl group. Polyglutamylation plays a key role in microtubule severing by spastin (SPAST). SPAST preferentially recognizes and acts on microtubules decorated with short polyglutamate tails: severing activity by SPAST increases as the number of glutamates per tubulin rises from one to eight, but decreases beyond this glutamylation threshold. In terms of processing, acetylation of alpha chains at Lys-40 is located inside the microtubule lumen. This modification has been correlated with increased microtubule stability, intracellular transport and ciliary assembly. Post-translationally, undergoes a tyrosination/detyrosination cycle, the cyclic removal and re-addition of a C-terminal tyrosine residue by the enzymes tubulin tyrosine carboxypeptidase (MATCAP, VASH1 or VASH2) and tubulin tyrosine ligase (TTL), respectively. Tyrosination promotes microtubule interaction with CAP-Gly microtubule plus-end tracking proteins. Tyrosinated tubulins regulate the initiation of dynein-driven motility. In terms of processing, detyrosination is involved in metaphase plate congression by guiding chromosomes during mitosis. Detyrosination increases microtubules-dependent mechanotransduction in dystrophic cardiac and skeletal muscle. In cardiomyocytes, detyrosinated microtubules are required to resist to contractile compression during contraction. In terms of tissue distribution, testis specific.

It localises to the cytoplasm. Its subcellular location is the cytoskeleton. The catalysed reaction is GTP + H2O = GDP + phosphate + H(+). Tubulin is the major constituent of microtubules, a cylinder consisting of laterally associated linear protofilaments composed of alpha- and beta-tubulin heterodimers. Microtubules grow by the addition of GTP-tubulin dimers to the microtubule end, where a stabilizing cap forms. Below the cap, tubulin dimers are in GDP-bound state, owing to GTPase activity of alpha-tubulin. This Oncorhynchus mykiss (Rainbow trout) protein is Tubulin alpha chain, testis-specific.